The sequence spans 332 residues: Galactosylgalactosylxylosylprotein 3-beta-glucuronosyltransferase 1 (332 aa).

Topologically, residues 1 to 6 (MPKRRD) are cytoplasmic. Positions 3–5 (KRR) are essential for transport from endoplasmic reticulum to Golgi apparatus and interaction with SAR1A. Residues 7–27 (ILAIVLIVLPWTLLITVWHQS) form a helical; Signal-anchor for type II membrane protein membrane-spanning segment. At 28-332 (TLAPLLAVHK…KGFTDPSVEI (305 aa)) the chain is on the lumenal side. Position 91–93 (91–93 (PTY)) interacts with UDP-alpha-D-glucuronate. Residues Thr103 and Thr108 each carry the phosphothreonine modification. Asp122 provides a ligand contact to UDP-alpha-D-glucuronate. An N-linked (GlcNAc...) asparagine glycan is attached at Asn140. 2 residues coordinate UDP-alpha-D-glucuronate: Arg165 and Arg170. Asn184 carries an N-linked (GlcNAc...) asparagine glycan. 195–197 (DDD) lines the UDP-alpha-D-glucuronate pocket. Asp197 contacts Mn(2+). The interaction with galactose moiety of substrate glycoprotein stretch occupies residues 243 to 252 (FDPHRPFAID). The active-site Proton donor/acceptor is Glu282. The N-linked (GlcNAc...) asparagine glycan is linked to Asn301. 309 to 311 (HTR) contacts UDP-alpha-D-glucuronate.

It belongs to the glycosyltransferase 43 family. Homodimer. Interacts with SAR1A. It depends on Mn(2+) as a cofactor. Post-translationally, the soluble form derives from the membrane form by proteolytic processing.

Its subcellular location is the golgi apparatus membrane. The protein resides in the secreted. The catalysed reaction is 3-O-(beta-D-galactosyl-(1-&gt;3)-beta-D-galactosyl-(1-&gt;4)-beta-D-xylosyl)-L-seryl-[protein] + UDP-alpha-D-glucuronate = 3-O-(beta-D-GlcA-(1-&gt;3)-beta-D-Gal-(1-&gt;3)-beta-D-Gal-(1-&gt;4)-beta-D-Xyl)-L-seryl-[protein] + UDP + H(+). The protein operates within protein modification; protein glycosylation. Its function is as follows. Involved in the biosynthesis of L2/HNK-1 carbohydrate epitope on glycoproteins. Can also play a role in glycosaminoglycan biosynthesis. Substrates include asialo-orosomucoid (ASOR), asialo-fetuin, and asialo-neural cell adhesion molecule. Requires sphingomyelin for activity: stearoyl-sphingomyelin was the most effective, followed by palmitoyl-sphingomyelin and lignoceroyl-sphingomyelin. Activity was demonstrated only for sphingomyelin with a saturated fatty acid and not for that with an unsaturated fatty acid, regardless of the length of the acyl group. This Pan troglodytes (Chimpanzee) protein is Galactosylgalactosylxylosylprotein 3-beta-glucuronosyltransferase 1.